The chain runs to 173 residues: MSENTTDNAALGQENVPAMPLAINLQYTKDLSFEVPAGASIFATLRSAPQISVNIDVQANRLEEDQAVYEVALAVRAEAAEPPAQEGGQAGRTVFIAELTYAAVVTLNNPPQELIEPILLVEVPRLIFPYVRSIVSDVTRDGGFPPVVLQPIDFVALWQAKRAQQFPEPAGEA.

The protein belongs to the SecB family. In terms of assembly, homotetramer, a dimer of dimers. One homotetramer interacts with 1 SecA dimer.

It localises to the cytoplasm. Its function is as follows. One of the proteins required for the normal export of preproteins out of the cell cytoplasm. It is a molecular chaperone that binds to a subset of precursor proteins, maintaining them in a translocation-competent state. It also specifically binds to its receptor SecA. This is Protein-export protein SecB 1 from Gluconobacter oxydans (strain 621H) (Gluconobacter suboxydans).